The primary structure comprises 344 residues: Phosphate acyltransferase (344 aa).

Belongs to the PlsX family. As to quaternary structure, homodimer. Probably interacts with PlsY.

It is found in the cytoplasm. It carries out the reaction a fatty acyl-[ACP] + phosphate = an acyl phosphate + holo-[ACP]. It functions in the pathway lipid metabolism; phospholipid metabolism. In terms of biological role, catalyzes the reversible formation of acyl-phosphate (acyl-PO(4)) from acyl-[acyl-carrier-protein] (acyl-ACP). This enzyme utilizes acyl-ACP as fatty acyl donor, but not acyl-CoA. The protein is Phosphate acyltransferase of Cyanothece sp. (strain PCC 7425 / ATCC 29141).